A 221-amino-acid chain; its full sequence is Probable septum site-determining protein MinC (221 aa).

Belongs to the MinC family. In terms of assembly, interacts with MinD and FtsZ.

In terms of biological role, cell division inhibitor that blocks the formation of polar Z ring septums. Rapidly oscillates between the poles of the cell to destabilize FtsZ filaments that have formed before they mature into polar Z rings. Prevents FtsZ polymerization. The polypeptide is Probable septum site-determining protein MinC (Aliivibrio salmonicida (strain LFI1238) (Vibrio salmonicida (strain LFI1238))).